The sequence spans 178 residues: ATP-dependent protease subunit HslV (178 aa).

Thr-7 is an active-site residue. Residues Gly-162, Cys-165, and Thr-168 each coordinate Na(+).

The protein belongs to the peptidase T1B family. HslV subfamily. A double ring-shaped homohexamer of HslV is capped on each side by a ring-shaped HslU homohexamer. The assembly of the HslU/HslV complex is dependent on binding of ATP.

The protein localises to the cytoplasm. It carries out the reaction ATP-dependent cleavage of peptide bonds with broad specificity.. With respect to regulation, allosterically activated by HslU binding. Protease subunit of a proteasome-like degradation complex believed to be a general protein degrading machinery. The chain is ATP-dependent protease subunit HslV from Burkholderia mallei (strain ATCC 23344).